The primary structure comprises 119 residues: Probable non-functional T cell receptor gamma variable 11 (119 aa).

An N-terminal signal peptide occupies residues 1-18 (MPLVVAVIFFSLWVFALG). One can recognise an Ig-like domain in the interval 23-119 (PEISISRPAN…VYHCACWIRH (97 aa)). N32 carries N-linked (GlcNAc...) asparagine glycosylation.

As to quaternary structure, most probably, the gamma-delta TR is not assembled due to incorrect folding of the gamma chain. Gamma-delta TR is a heterodimer composed of a gamma and delta chain; disulfide-linked. The gamma-delta TR is associated with the transmembrane signaling CD3 coreceptor proteins following the stoichiometry: a single gamma-delta TR heterodimer associates with one CD3D-CD3E heterodimer, one CD3G-CD3E heterodimer and one CD247 homodimer forming a stable octameric structure. Upon activation, gamma-delta TR complex associates with FCER1G to initiate intracellular signaling.

It localises to the cell membrane. Its function is as follows. Probable non-functional open reading frame (ORF) of V region of the variable domain of T cell receptor (TR) gamma chain. Non-functional ORF generally cannot participate in the synthesis of a productive T cell receptor (TR) chain due to altered V-(D)-J or switch recombination and/or splicing site (at mRNA level) and/or conserved amino acid change (protein level). Gamma-delta TRs recognize a variety of self and foreign non-peptide antigens frequently expressed at the epithelial boundaries between the host and external environment, including endogenous lipids presented by MH-like protein CD1D and phosphoantigens presented by butyrophilin-like molecule BTN3A1. Upon antigen recognition induces rapid, innate-like immune responses involved in pathogen clearance and tissue repair. Binding of gamma-delta TR complex to antigen triggers phosphorylation of immunoreceptor tyrosine-based activation motifs (ITAMs) in the CD3 chains by the LCK and FYN kinases, allowing the recruitment, phosphorylation, and activation of ZAP70 that facilitates phosphorylation of the scaffolding proteins LCP2 and LAT. This lead to the formation of a supramolecular signalosome that recruits the phospholipase PLCG1, resulting in calcium mobilization and ERK activation, ultimately leading to T cell expansion and differentiation into effector cells. Gamma-delta TRs are produced through somatic rearrangement of a limited repertoire of variable (V), diversity (D), and joining (J) genes. The potential diversity of gamma-delta TRs is conferred by the unique ability to rearrange (D) genes in tandem and to utilize all three reading frames. The combinatorial diversity is considerably increased by the sequence exonuclease trimming and random nucleotide (N) region additions which occur during the V-(D)-J rearrangements. This chain is Probable non-functional T cell receptor gamma variable 11, found in Homo sapiens (Human).